The primary structure comprises 160 residues: Regulatory protein RecX (160 aa).

This sequence belongs to the RecX family.

It localises to the cytoplasm. In terms of biological role, modulates RecA activity. This chain is Regulatory protein RecX, found in Xanthomonas oryzae pv. oryzae (strain MAFF 311018).